The sequence spans 174 residues: N5-carboxyaminoimidazole ribonucleotide mutase (174 aa).

Positions 15, 18, and 45 each coordinate substrate.

This sequence belongs to the AIR carboxylase family. Class I subfamily.

It carries out the reaction 5-carboxyamino-1-(5-phospho-D-ribosyl)imidazole + H(+) = 5-amino-1-(5-phospho-D-ribosyl)imidazole-4-carboxylate. The protein operates within purine metabolism; IMP biosynthesis via de novo pathway; 5-amino-1-(5-phospho-D-ribosyl)imidazole-4-carboxylate from 5-amino-1-(5-phospho-D-ribosyl)imidazole (N5-CAIR route): step 2/2. Its function is as follows. Catalyzes the conversion of N5-carboxyaminoimidazole ribonucleotide (N5-CAIR) to 4-carboxy-5-aminoimidazole ribonucleotide (CAIR). The chain is N5-carboxyaminoimidazole ribonucleotide mutase from Pyrococcus abyssi (strain GE5 / Orsay).